We begin with the raw amino-acid sequence, 121 residues long: Small ribosomal subunit protein uS13 (121 aa).

Residues 94–121 (GLPLRGQRTRTNARTRKGPRRAAQALKK) form a disordered region.

Belongs to the universal ribosomal protein uS13 family. In terms of assembly, part of the 30S ribosomal subunit. Forms a loose heterodimer with protein S19. Forms two bridges to the 50S subunit in the 70S ribosome.

Functionally, located at the top of the head of the 30S subunit, it contacts several helices of the 16S rRNA. In the 70S ribosome it contacts the 23S rRNA (bridge B1a) and protein L5 of the 50S subunit (bridge B1b), connecting the 2 subunits; these bridges are implicated in subunit movement. Contacts the tRNAs in the A and P-sites. This is Small ribosomal subunit protein uS13 from Burkholderia mallei (strain NCTC 10247).